The chain runs to 201 residues: Ras-related protein Rab-35 (201 aa).

GTP-binding residues include glycine 18, valine 19, glycine 20, lysine 21, serine 22, serine 23, serine 34, glycine 35, tyrosine 37, threonine 39, and threonine 40. Residue serine 22 participates in Mg(2+) binding. Positions 30-42 match the Switch 1 motif; sequence DNTFSGSYITTIG. Threonine 40 and aspartate 63 together coordinate Mg(2+). The Switch 2 signature appears at 64–80; the sequence is TAGQERFRTITSTYYRG. Glycine 66 is a binding site for GTP. At threonine 72 the chain carries Phosphothreonine; by LRRK2. An O-(2-cholinephosphoryl)serine modification is found at serine 75. Tyrosine 77 is modified (O-AMP-tyrosine). Asparagine 120, lysine 121, aspartate 123, alanine 151, and lysine 152 together coordinate GTP. Residues cysteine 200 and cysteine 201 are each lipidated (S-geranylgeranyl cysteine).

Belongs to the small GTPase superfamily. Rab family. In terms of assembly, interacts with DENND1A and DENND1B; in a nucleotide-dependent manner. Interacts with DENND1C; weak interaction which is nucleotide-independent. Interacts (GTP-bound form) with ACAP2, RUSC2, OCRL MICAL1 and MICALL1; the interaction is direct and probably recruits these effectors to membranes. Interacts with EHD1; the interaction is indirect through MICALL1 and probably recruits EHD1 to membranes. Interacts with GDI1, GDI2, CHM and CHML; phosphorylation at Thr-72 by LRRK2 disrupts these interactions. Mg(2+) is required as a cofactor. Post-translationally, phosphorylation at Thr-72 by LRRK2 prevents the association of regulatory proteins including CHM, CHML and GDP dissociation inhibitors GDI1 and GDI2. AMPylation at Tyr-77 by L.pneumophila DrrA occurs in the switch 2 region and leads to moderate inactivation of the GTPase activity. It appears to prolong the lifetime of the GTP state of RAB1B by restricting access of GTPase effectors to switch 2 and blocking effector-stimulated GTP hydrolysis, thereby rendering RAB35 constitutively active. In terms of processing, phosphocholinated by L.pneumophila AnkX. Both GDP-bound and GTP-bound forms can be phosphocholinated. Phosphocholination inhibits the GEF activity of DENND1A.

The protein resides in the cell membrane. It localises to the membrane. The protein localises to the clathrin-coated pit. It is found in the cytoplasmic vesicle. Its subcellular location is the clathrin-coated vesicle. The protein resides in the endosome. It localises to the melanosome. It catalyses the reaction GTP + H2O = GDP + phosphate + H(+). Its activity is regulated as follows. Regulated by guanine nucleotide exchange factors (GEFs) including DENND1A, DENND1B and DENND1C which promote the exchange of bound GDP for free GTP. Regulated by GTPase activating proteins (GAPs) including TBC1D10 and TBC1D13 which increase GTP hydrolysis activity. Inhibited by GDP dissociation inhibitors (GDIs) which prevent Rab-GDP dissociation. Functionally, the small GTPases Rab are key regulators of intracellular membrane trafficking, from the formation of transport vesicles to their fusion with membranes. Rabs cycle between an inactive GDP-bound form and an active GTP-bound form that is able to recruit to membranes different sets of downstream effectors directly responsible for vesicle formation, movement, tethering and fusion. RAB35 is involved in the process of endocytosis and is an essential rate-limiting regulator of the fast recycling pathway back to the plasma membrane. During cytokinesis, required for the postfurrowing terminal steps, namely for intercellular bridge stability and abscission, possibly by controlling phosphatidylinositol 4,5-bis phosphate (PIP2) and SEPT2 localization at the intercellular bridge. May indirectly regulate neurite outgrowth. Together with TBC1D13 may be involved in regulation of insulin-induced glucose transporter SLC2A4/GLUT4 translocation to the plasma membrane in adipocytes. In Homo sapiens (Human), this protein is Ras-related protein Rab-35.